A 353-amino-acid polypeptide reads, in one-letter code: Dihydroorotate dehydrogenase (quinone) (353 aa).

FMN-binding positions include 67–71 and threonine 91; that span reads AGFDK. Substrate is bound at residue lysine 71. A substrate-binding site is contributed by 116–120; the sequence is NRMGF. FMN-binding residues include asparagine 144 and asparagine 177. Asparagine 177 contributes to the substrate binding site. Catalysis depends on serine 180, which acts as the Nucleophile. Residue asparagine 182 participates in substrate binding. FMN-binding residues include lysine 213 and threonine 241. A substrate-binding site is contributed by 242-243; the sequence is NT. FMN contacts are provided by residues glycine 265, glycine 294, and 315-316; that span reads YT.

The protein belongs to the dihydroorotate dehydrogenase family. Type 2 subfamily. Monomer. The cofactor is FMN.

Its subcellular location is the cell membrane. It catalyses the reaction (S)-dihydroorotate + a quinone = orotate + a quinol. It functions in the pathway pyrimidine metabolism; UMP biosynthesis via de novo pathway; orotate from (S)-dihydroorotate (quinone route): step 1/1. In terms of biological role, catalyzes the conversion of dihydroorotate to orotate with quinone as electron acceptor. In Mycobacteroides abscessus (strain ATCC 19977 / DSM 44196 / CCUG 20993 / CIP 104536 / JCM 13569 / NCTC 13031 / TMC 1543 / L948) (Mycobacterium abscessus), this protein is Dihydroorotate dehydrogenase (quinone).